Consider the following 316-residue polypeptide: HPr kinase/phosphorylase (316 aa).

Catalysis depends on residues H143 and K164. 158–165 (GEAGSGKS) contacts ATP. S165 serves as a coordination point for Mg(2+). D182 (proton acceptor; for phosphorylation activity. Proton donor; for dephosphorylation activity) is an active-site residue. The important for the catalytic mechanism of both phosphorylation and dephosphorylation stretch occupies residues 206-215 (LEVRGLGVLN). E207 provides a ligand contact to Mg(2+). R251 is a catalytic residue. Residues 272-277 (PVMPGR) are important for the catalytic mechanism of dephosphorylation.

It belongs to the HPrK/P family. Homohexamer. Mg(2+) serves as cofactor.

It carries out the reaction [HPr protein]-L-serine + ATP = [HPr protein]-O-phospho-L-serine + ADP + H(+). It catalyses the reaction [HPr protein]-O-phospho-L-serine + phosphate + H(+) = [HPr protein]-L-serine + diphosphate. In terms of biological role, catalyzes the ATP- as well as the pyrophosphate-dependent phosphorylation of a specific serine residue in HPr, a phosphocarrier protein of the phosphoenolpyruvate-dependent sugar phosphotransferase system (PTS). HprK/P also catalyzes the pyrophosphate-producing, inorganic phosphate-dependent dephosphorylation (phosphorolysis) of seryl-phosphorylated HPr (P-Ser-HPr). The protein is HPr kinase/phosphorylase of Xanthomonas euvesicatoria pv. vesicatoria (strain 85-10) (Xanthomonas campestris pv. vesicatoria).